Consider the following 434-residue polypeptide: Nuclear distribution protein PAC1 (434 aa).

The LisH domain maps to 8–40; that stretch reads QKDDLHKAMLDYLYANNHTAAFNALKESAGITY. The stretch at 57-83 forms a coiled coil; it reads TSVIRLQKKIMELENRNAALQEELSMS. WD repeat units follow at residues 106-147, 149-187, 191-230, 233-272, 275-334, 337-378, and 401-434; these read GHRA…RTLK, HTKPVNDLDFDHKGHLLVTCSSDLFIKIWDSQNEWKNTK, GHDHAVSAVRFMPGDQLIVSASRDRTIRVFDVASTHQVRT, GHSEWVRCVIPSADGTMLASGSKDQTVRLWDPLTGEPKSE, GHEN…MIRN, GHDN…RIVE, and KKVNGVDSVDAEPEKVVNVVATGSVDETIKIWLP.

It belongs to the WD repeat LIS1/nudF family. As to quaternary structure, self-associates. Interacts with NDL1 and dynein.

Its subcellular location is the cytoplasm. It localises to the cytoskeleton. The protein resides in the spindle pole. Functionally, positively regulates the activity of the minus-end directed microtubule motor protein dynein. May enhance dynein-mediated microtubule sliding by targeting dynein to the microtubule plus end. Required for nuclear migration during vegetative growth as well as development. Required for retrograde early endosome (EE) transport from the hyphal tip. Required for localization of dynein to the mitotic spindle poles. Recruits additional proteins to the dynein complex at SPBs. This is Nuclear distribution protein PAC1 from Coprinopsis cinerea (strain Okayama-7 / 130 / ATCC MYA-4618 / FGSC 9003) (Inky cap fungus).